The primary structure comprises 301 residues: Ribosomal RNA small subunit methyltransferase H (301 aa).

Residues 35 to 37 (GGH), Asp55, Phe84, Asp105, and Gln112 contribute to the S-adenosyl-L-methionine site.

It belongs to the methyltransferase superfamily. RsmH family.

The protein localises to the cytoplasm. It carries out the reaction cytidine(1402) in 16S rRNA + S-adenosyl-L-methionine = N(4)-methylcytidine(1402) in 16S rRNA + S-adenosyl-L-homocysteine + H(+). Specifically methylates the N4 position of cytidine in position 1402 (C1402) of 16S rRNA. This is Ribosomal RNA small subunit methyltransferase H from Chloroflexus aggregans (strain MD-66 / DSM 9485).